A 375-amino-acid polypeptide reads, in one-letter code: Aminomethyltransferase (375 aa).

Belongs to the GcvT family. In terms of assembly, the glycine cleavage system is composed of four proteins: P, T, L and H.

It catalyses the reaction N(6)-[(R)-S(8)-aminomethyldihydrolipoyl]-L-lysyl-[protein] + (6S)-5,6,7,8-tetrahydrofolate = N(6)-[(R)-dihydrolipoyl]-L-lysyl-[protein] + (6R)-5,10-methylene-5,6,7,8-tetrahydrofolate + NH4(+). The glycine cleavage system catalyzes the degradation of glycine. This is Aminomethyltransferase from Ralstonia nicotianae (strain ATCC BAA-1114 / GMI1000) (Ralstonia solanacearum).